Consider the following 197-residue polypeptide: 5'-deoxynucleotidase plu3092 (197 aa).

Residues 16–17 and His31 each bind substrate; that span reads RW. An HD domain is found at 28 to 140; sequence VSEHSLQVAF…IKQADSLCAY (113 aa). Residues His31, His66, and Asp67 each contribute to the a divalent metal cation site. Residues Asp67, 75 to 78, and Asp135 contribute to the substrate site; that span reads DLPT. Asp135 contributes to the a divalent metal cation binding site.

Belongs to the 5DNU family. In terms of assembly, homodimer. A divalent metal cation is required as a cofactor.

The protein resides in the cytoplasm. It catalyses the reaction a 2'-deoxyribonucleoside 5'-phosphate + H2O = a 2'-deoxyribonucleoside + phosphate. Functionally, catalyzes the strictly specific dephosphorylation of 2'-deoxyribonucleoside 5'-monophosphates. The polypeptide is 5'-deoxynucleotidase plu3092 (Photorhabdus laumondii subsp. laumondii (strain DSM 15139 / CIP 105565 / TT01) (Photorhabdus luminescens subsp. laumondii)).